An 88-amino-acid polypeptide reads, in one-letter code: MKTVLAFLFLTFIAFTHAESYEDVKEEIKNEVEREIFEDLEEESDVLESNVRELNDAKPWRFRRAIRRVRWRKVAPYIPFVVRTVGKK.

The first 18 residues, 1-18 (MKTVLAFLFLTFIAFTHA), serve as a signal peptide directing secretion. A propeptide spanning residues 19–57 (ESYEDVKEEIKNEVEREIFEDLEEESDVLESNVRELNDA) is cleaved from the precursor. Val85 carries the post-translational modification Valine amide.

The protein belongs to the arminin family. As to expression, expressed in entodermal epithelium along the body column.

Its subcellular location is the secreted. The protein resides in the target cell membrane. Functionally, antimicrobial peptide with a broad-spectrum antimicrobial activity. Keeps its antibacterial activity under a wide range of salt concentrations that mimic physiological conditions of human blood, which is surprising, since Hydra is an obligate freshwater animal with nearly no salt tolerance. Does not affect red blood cells. The protein is Arminin 1b of Hydra vulgaris (Hydra).